A 420-amino-acid polypeptide reads, in one-letter code: Protein translocase subunit SecY (420 aa).

The next 10 membrane-spanning stretches (helical) occupy residues 9 to 29, 61 to 81, 104 to 124, 141 to 161, 173 to 193, 203 to 223, 257 to 277, 300 to 320, 355 to 375, and 377 to 397; these read ILIT…PIPG, LSII…MELL, IVRY…SVGL, VFMI…MWIG, ISLI…SGTF, ILML…IIYV, LSGV…STIL, YNIL…SIVF, KLTL…WILV, and AMGV…QVAI.

This sequence belongs to the SecY/SEC61-alpha family. Component of the Sec protein translocase complex. Heterotrimer consisting of SecY, SecE and SecG subunits. The heterotrimers can form oligomers, although 1 heterotrimer is thought to be able to translocate proteins. Interacts with the ribosome. Interacts with SecDF, and other proteins may be involved. Interacts with SecA.

It is found in the cell inner membrane. The central subunit of the protein translocation channel SecYEG. Consists of two halves formed by TMs 1-5 and 6-10. These two domains form a lateral gate at the front which open onto the bilayer between TMs 2 and 7, and are clamped together by SecE at the back. The channel is closed by both a pore ring composed of hydrophobic SecY resides and a short helix (helix 2A) on the extracellular side of the membrane which forms a plug. The plug probably moves laterally to allow the channel to open. The ring and the pore may move independently. This Helicobacter pylori (strain J99 / ATCC 700824) (Campylobacter pylori J99) protein is Protein translocase subunit SecY.